A 526-amino-acid polypeptide reads, in one-letter code: Fumitremorgin C synthase (526 aa).

Residues L4–I24 traverse the membrane as a helical segment. C443 serves as a coordination point for heme.

The protein belongs to the cytochrome P450 family. It depends on heme as a cofactor.

Its subcellular location is the membrane. The catalysed reaction is tryprostatin A + reduced [NADPH--hemoprotein reductase] + O2 = fumitremorgin C + oxidized [NADPH--hemoprotein reductase] + 2 H2O + H(+). It participates in mycotoxin biosynthesis. Cytochrome P450 monooxygenase; part of the gene cluster that mediates the biosynthesis of fumitremorgins, indole alkaloids that carry not only intriguing chemical structures, but also interesting biological and pharmacological activities. The biosynthesis of fumitremorgin-type alkaloids begins by condensation of the two amino acids L-tryptophan and L-proline to brevianamide F, catalyzed by the non-ribosomal peptide synthetase ftmPS/ftmA. Brevianamide F is then prenylated by the prenyltransferase ftmPT1/ftmB in the presence of dimethylallyl diphosphate, resulting in the formation of tryprostatin B. The three cytochrome P450 monooxygenases, ftmP450-1/ftmC, ftmP450-2/ftmE and ftmP450-3/FtmG, are responsible for the conversion of tryprostatin B to 6-hydroxytryprostatin B, tryprostatin A to fumitremorgin C and fumitremorgin C to 12,13-dihydroxyfumitremorgin C, respectively. The putative methyltransferase ftmMT/ftmD is expected for the conversion of 6-hydroxytryprostatin B to tryprostatin A. FtmPT2/FtmH catalyzes the prenylation of 12,13-dihydroxyfumitre-morgin C in the presence of dimethylallyl diphosphate, resulting in the formation of fumitremorgin B. Fumitremorgin B is further converted to verruculogen by ftmOx1/ftmF via the insertion of an endoperoxide bond between the two prenyl moieties. Finally, verruculogen is further converted to fumitremorgin A by the verruculogen prenyltransferase ftmPT3. This is Fumitremorgin C synthase from Neosartorya fischeri (strain ATCC 1020 / DSM 3700 / CBS 544.65 / FGSC A1164 / JCM 1740 / NRRL 181 / WB 181) (Aspergillus fischerianus).